Here is a 343-residue protein sequence, read N- to C-terminus: Nuclear hormone receptor family member nhr-167 (343 aa).

A DNA-binding region (nuclear receptor) is located at residues 5 to 81 (HQKCAVCGRF…VGMTLPSYLL (77 aa)). 2 NR C4-type zinc fingers span residues 8 to 28 (CAVC…CNSC) and 45 to 64 (CFRG…CTSC). One can recognise an NR LBD domain in the interval 101-339 (THNKRMDSLF…KKLVKDGIEA (239 aa)).

Belongs to the nuclear hormone receptor family.

It is found in the nucleus. In terms of biological role, orphan nuclear receptor. This is Nuclear hormone receptor family member nhr-167 (nhr-167) from Caenorhabditis elegans.